A 286-amino-acid polypeptide reads, in one-letter code: 33 kDa chaperonin (286 aa).

Cystine bridges form between Cys225-Cys227 and Cys258-Cys261.

It belongs to the HSP33 family. Post-translationally, under oxidizing conditions two disulfide bonds are formed involving the reactive cysteines. Under reducing conditions zinc is bound to the reactive cysteines and the protein is inactive.

It is found in the cytoplasm. In terms of biological role, redox regulated molecular chaperone. Protects both thermally unfolding and oxidatively damaged proteins from irreversible aggregation. Plays an important role in the bacterial defense system toward oxidative stress. The polypeptide is 33 kDa chaperonin (Shewanella oneidensis (strain ATCC 700550 / JCM 31522 / CIP 106686 / LMG 19005 / NCIMB 14063 / MR-1)).